Consider the following 164-residue polypeptide: S-ribosylhomocysteine lyase (164 aa).

Residues H54, H58, and C128 each contribute to the Fe cation site.

It belongs to the LuxS family. In terms of assembly, homodimer. Fe cation is required as a cofactor.

It catalyses the reaction S-(5-deoxy-D-ribos-5-yl)-L-homocysteine = (S)-4,5-dihydroxypentane-2,3-dione + L-homocysteine. Functionally, involved in the synthesis of autoinducer 2 (AI-2) which is secreted by bacteria and is used to communicate both the cell density and the metabolic potential of the environment. The regulation of gene expression in response to changes in cell density is called quorum sensing. Catalyzes the transformation of S-ribosylhomocysteine (RHC) to homocysteine (HC) and 4,5-dihydroxy-2,3-pentadione (DPD). The sequence is that of S-ribosylhomocysteine lyase from Campylobacter jejuni subsp. doylei (strain ATCC BAA-1458 / RM4099 / 269.97).